A 400-amino-acid chain; its full sequence is Transcription initiation factor IIF subunit beta (400 aa).

A compositionally biased stretch (polar residues) spans 1-19 (MSSGSAGAPALSNNSTNSV). The tract at residues 1 to 47 (MSSGSAGAPALSNNSTNSVAKEKSGNISGDEYLSQEEEVFDGNDIEN) is disordered. A phosphoserine mark is found at serine 28, serine 34, and serine 56. Positions 33-47 (LSQEEEVFDGNDIEN) are enriched in acidic residues. Disordered regions lie at residues 165–194 (QEREEELKKKQQQQKRRNNRKKFNHRVMTD) and 366–400 (TLGELADEQTGSAGDNAQGDAEADLEDEIEMEDVV). Residues 174–189 (KQQQQKRRNNRKKFNH) are compositionally biased toward basic residues. The segment covering 386–400 (AEADLEDEIEMEDVV) has biased composition (acidic residues).

The protein belongs to the TFIIF beta subunit family. As to quaternary structure, TFIIF is composed of three different subunits: TFG1/RAP74, TFG2/RAP30 and TAF14.

It is found in the nucleus. TFIIF is a general transcription initiation factor that binds to RNA polymerase II. Its functions include the recruitment of RNA polymerase II to the promoter bound DNA-TBP-TFIIB complex, decreasing the affinity of RNA polymerase II for non-specific DNA, allowing for the subsequent recruitment of TFIIE and TFIIH, and facilitating RNA polymerase II elongation. The chain is Transcription initiation factor IIF subunit beta (TFG2) from Saccharomyces cerevisiae (strain ATCC 204508 / S288c) (Baker's yeast).